The chain runs to 300 residues: Probable L-serine dehydratase, alpha chain (300 aa).

The protein belongs to the iron-sulfur dependent L-serine dehydratase family. As to quaternary structure, heterodimer of an alpha chain and a beta chain. The cofactor is [4Fe-4S] cluster.

The enzyme catalyses L-serine = pyruvate + NH4(+). The protein operates within carbohydrate biosynthesis; gluconeogenesis. This chain is Probable L-serine dehydratase, alpha chain (sdaAA), found in Bacillus subtilis (strain 168).